The primary structure comprises 336 residues: 7,8-didemethyl-8-hydroxy-5-deazariboflavin synthase (336 aa).

The 232-residue stretch at 18 to 249 (ITYSPAYTLV…TSIAIQVPPN (232 aa)) folds into the Radical SAM core domain. Positions 32, 36, and 39 each coordinate [4Fe-4S] cluster.

It belongs to the radical SAM superfamily. CofG family. Consists of two subunits, CofG and CofH. It depends on [4Fe-4S] cluster as a cofactor.

It catalyses the reaction 5-amino-5-(4-hydroxybenzyl)-6-(D-ribitylimino)-5,6-dihydrouracil + S-adenosyl-L-methionine = 7,8-didemethyl-8-hydroxy-5-deazariboflavin + 5'-deoxyadenosine + L-methionine + NH4(+) + H(+). It participates in cofactor biosynthesis; coenzyme F0 biosynthesis. Its function is as follows. Catalyzes the radical-mediated synthesis of 7,8-didemethyl-8-hydroxy-5-deazariboflavin from 5-amino-5-(4-hydroxybenzyl)-6-(D-ribitylimino)-5,6-dihydrouracil. This chain is 7,8-didemethyl-8-hydroxy-5-deazariboflavin synthase, found in Synechococcus elongatus (strain ATCC 33912 / PCC 7942 / FACHB-805) (Anacystis nidulans R2).